A 768-amino-acid polypeptide reads, in one-letter code: Levansucrase (768 aa).

The signal sequence occupies residues 1–36 (MLENKKHKKMSLSGKSLLMGTLSTAAIVLSASTVNA). Composition is skewed to polar residues over residues 57–68 (SASVNKNDNSGL), 80–99 (TETNLNSSLNSGKETSSQVN), 106–134 (SSTQVGSTPISSAIINNGKASSDLNQDSD), and 143–153 (NNSQGQSSTSS). The disordered stretch occupies residues 57–158 (SASVNKNDNS…SSTSSEKTEL (102 aa)). Positions 250, 251, and 320 each coordinate sucrose. The Nucleophile role is filled by D251. D398 contacts Ca(2+). Residues R403 and D404 each contribute to the sucrose site. Positions 429, 468, and 502 each coordinate Ca(2+). E503 is a sucrose binding site. E505 serves as the catalytic Proton donor/acceptor. R523 provides a ligand contact to sucrose. The disordered stretch occupies residues 688–736 (HQPVTPNVPTTPEKPENPTTPNTPDTPRTPEVPTTPVKKTTQSELPKAG). Over residues 691–727 (VTPNVPTTPEKPENPTTPNTPDTPRTPEVPTTPVKKT) the composition is skewed to low complexity. Residues 732–736 (LPKAG) carry the LPXTG sorting signal motif. A735 is subject to Pentaglycyl murein peptidoglycan amidated alanine. Positions 736–768 (GAKDGIAATILGAISSMLGVIGLAGISKRKRNN) are cleaved as a propeptide — removed by sortase.

This sequence belongs to the glycosyl hydrolase 68 family.

Its subcellular location is the secreted. The protein localises to the cell wall. It localises to the cell surface. It carries out the reaction [6)-beta-D-fructofuranosyl-(2-&gt;](n) alpha-D-glucopyranoside + sucrose = [6)-beta-D-fructofuranosyl-(2-&gt;](n+1) alpha-D-glucopyranoside + D-glucose. Calcium ions are required for optimal activity, but do not seem to be essential since addition of EDTA causes only a 48% drop in activity. Ca(2+) may play an important structural role and promote stability of levansucrase. In terms of biological role, fructosyltransferase that catalyzes the polymerization of the fructose moiety of sucrose to produce levan polymer and the fructo-oligosaccharide (FOS) 1-kestose. Is also able to convert raffinose into a fructan polymer and a single oligosaccharide (most likely Gal-Glc-Frc-Frc) in vitro; however, L.gasseri strain DSM 20077 is unable to ferment raffinose. Also displays sucrose hydrolase activity. The polypeptide is Levansucrase (Lactobacillus gasseri).